The chain runs to 480 residues: GTPase Obg (480 aa).

The Obg domain occupies 2 to 159; it reads TRFIDRVVIH…RDLTLELKTV (158 aa). An OBG-type G domain is found at 160–341; the sequence is ADVGLVGFPS…LTFALWDMVA (182 aa). Residues 166-173, 191-195, 212-215, 292-295, and 322-324 contribute to the GTP site; these read GFPSAGKS, FTTLA, DVPG, NKID, and STV. Positions 173 and 193 each coordinate Mg(2+). Residues 359–437 form the OCT domain; it reads PIPVDETAFS…IGDMTFDWEP (79 aa). Residues 441 to 480 form a disordered region; it reads AGVDVPLTGRGTDVRLEQTDRVGADERKAARKARRQSGDE. Residues 452-468 are compositionally biased toward basic and acidic residues; sequence TDVRLEQTDRVGADERK. A compositionally biased stretch (basic residues) spans 469–480; sequence AARKARRQSGDE.

This sequence belongs to the TRAFAC class OBG-HflX-like GTPase superfamily. OBG GTPase family. In terms of assembly, monomer. Mg(2+) is required as a cofactor.

The protein localises to the cytoplasm. Functionally, an essential GTPase which binds GTP, GDP and possibly (p)ppGpp with moderate affinity, with high nucleotide exchange rates and a fairly low GTP hydrolysis rate. Plays a role in control of the cell cycle, stress response, ribosome biogenesis and in those bacteria that undergo differentiation, in morphogenesis control. This Mycolicibacterium vanbaalenii (strain DSM 7251 / JCM 13017 / BCRC 16820 / KCTC 9966 / NRRL B-24157 / PYR-1) (Mycobacterium vanbaalenii) protein is GTPase Obg.